A 115-amino-acid chain; its full sequence is UPF0738 protein SE_0694 (115 aa).

The protein belongs to the UPF0738 family.

In Staphylococcus epidermidis (strain ATCC 12228 / FDA PCI 1200), this protein is UPF0738 protein SE_0694.